Here is a 459-residue protein sequence, read N- to C-terminus: Trigger factor (459 aa).

Positions 166–245 (GDFANIDLTA…VNSVKAEELP (80 aa)) constitute a PPIase FKBP-type domain.

The protein belongs to the FKBP-type PPIase family. Tig subfamily.

Its subcellular location is the cytoplasm. It carries out the reaction [protein]-peptidylproline (omega=180) = [protein]-peptidylproline (omega=0). Its function is as follows. Involved in protein export. Acts as a chaperone by maintaining the newly synthesized protein in an open conformation. Functions as a peptidyl-prolyl cis-trans isomerase. The chain is Trigger factor from Bifidobacterium longum (strain DJO10A).